A 177-amino-acid chain; its full sequence is Cytochrome c-type biogenesis protein CcmE (177 aa).

At 1–7 (MTRKSRR) the chain is on the cytoplasmic side. The helical; Signal-anchor for type II membrane protein transmembrane segment at 8 to 28 (LILIAACGAVLALALGLILSA) threads the bilayer. The Periplasmic portion of the chain corresponds to 29-177 (MSGSIVFFRS…DATLGQRSER (149 aa)). Heme contacts are provided by histidine 122 and tyrosine 126. The segment at 133–177 (DALKAQGRWQEGGSKEAPKDASKAAPKDAAKPETADATLGQRSER) is disordered. A compositionally biased stretch (basic and acidic residues) spans 145 to 166 (GSKEAPKDASKAAPKDAAKPET).

The protein belongs to the CcmE/CycJ family.

Its subcellular location is the cell inner membrane. Its function is as follows. Heme chaperone required for the biogenesis of c-type cytochromes. Transiently binds heme delivered by CcmC and transfers the heme to apo-cytochromes in a process facilitated by CcmF and CcmH. The sequence is that of Cytochrome c-type biogenesis protein CcmE from Methylorubrum extorquens (strain PA1) (Methylobacterium extorquens).